We begin with the raw amino-acid sequence, 343 residues long: Heat-inducible transcription repressor HrcA (343 aa).

The protein belongs to the HrcA family.

Negative regulator of class I heat shock genes (grpE-dnaK-dnaJ and groELS operons). Prevents heat-shock induction of these operons. The sequence is that of Heat-inducible transcription repressor HrcA from Thermoanaerobacter pseudethanolicus (strain ATCC 33223 / 39E) (Clostridium thermohydrosulfuricum).